The primary structure comprises 962 residues: Glycine dehydrogenase (decarboxylating) (962 aa).

Lys-709 carries the N6-(pyridoxal phosphate)lysine modification.

Belongs to the GcvP family. As to quaternary structure, the glycine cleavage system is composed of four proteins: P, T, L and H. Requires pyridoxal 5'-phosphate as cofactor.

The enzyme catalyses N(6)-[(R)-lipoyl]-L-lysyl-[glycine-cleavage complex H protein] + glycine + H(+) = N(6)-[(R)-S(8)-aminomethyldihydrolipoyl]-L-lysyl-[glycine-cleavage complex H protein] + CO2. The glycine cleavage system catalyzes the degradation of glycine. The P protein binds the alpha-amino group of glycine through its pyridoxal phosphate cofactor; CO(2) is released and the remaining methylamine moiety is then transferred to the lipoamide cofactor of the H protein. The protein is Glycine dehydrogenase (decarboxylating) of Shewanella sp. (strain MR-7).